A 286-amino-acid polypeptide reads, in one-letter code: GTP cyclohydrolase 1 type 2 homolog (286 aa).

A divalent metal cation contacts are provided by H66, H67, D103, H254, and E258.

The protein belongs to the GTP cyclohydrolase I type 2/NIF3 family. In terms of assembly, homohexamer.

This chain is GTP cyclohydrolase 1 type 2 homolog, found in Treponema pallidum (strain Nichols).